Consider the following 224-residue polypeptide: MAGQISPTRSALLASKASLKTANGGADLLKRKRDALIGEFFALVKDALAAREQLSSVSKGAYTSLFGAKAWDSPEAVESLSLAGTGDYAVDMQIESIYGVKVPKINIPERAAQADFSPINVGARTIQASNDFGGVLEAIVKVAATETKLRRIGEEIKKTSRRVNALEQVVIPGIHDDIRFIRSVLDQREREAGYTQKKIKAKIEGKNKEAREAAAATSHGSAAD.

The segment at 190-224 (REAGYTQKKIKAKIEGKNKEAREAAAATSHGSAAD) is disordered. Positions 201 to 212 (AKIEGKNKEARE) are enriched in basic and acidic residues. Positions 213–224 (AAAATSHGSAAD) are enriched in low complexity.

Belongs to the V-ATPase D subunit family.

Produces ATP from ADP in the presence of a proton gradient across the membrane. This chain is V-type ATP synthase subunit D (atpD), found in Deinococcus radiodurans (strain ATCC 13939 / DSM 20539 / JCM 16871 / CCUG 27074 / LMG 4051 / NBRC 15346 / NCIMB 9279 / VKM B-1422 / R1).